Here is a 282-residue protein sequence, read N- to C-terminus: Pantothenate synthetase (282 aa).

Residue 30–37 (MGYLHEGH) coordinates ATP. His-37 serves as the catalytic Proton donor. Gln-61 is a (R)-pantoate binding site. Beta-alanine is bound at residue Gln-61. 147 to 150 (GQKD) lines the ATP pocket. Gln-153 is a (R)-pantoate binding site. Residues Val-176 and 184–187 (MSSR) contribute to the ATP site.

It belongs to the pantothenate synthetase family. As to quaternary structure, homodimer.

The protein localises to the cytoplasm. It carries out the reaction (R)-pantoate + beta-alanine + ATP = (R)-pantothenate + AMP + diphosphate + H(+). Its pathway is cofactor biosynthesis; (R)-pantothenate biosynthesis; (R)-pantothenate from (R)-pantoate and beta-alanine: step 1/1. Catalyzes the condensation of pantoate with beta-alanine in an ATP-dependent reaction via a pantoyl-adenylate intermediate. This chain is Pantothenate synthetase, found in Pelotomaculum thermopropionicum (strain DSM 13744 / JCM 10971 / SI).